The sequence spans 504 residues: Sperm motility kinase 2A (504 aa).

The Protein kinase domain occupies 28–276 (YEMLGTIGHG…VAEVMMHPWV (249 aa)). ATP-binding positions include 34–42 (IGHGGSTKV) and lysine 57. Residue aspartate 147 is the Proton acceptor of the active site. A UBA domain is found at 294 to 334 (KPDPAIVKAMGHIGFQAQDIEDSLRQRKFNETMASYCLLKK). 2 stretches are compositionally biased toward polar residues: residues 376–393 (PTSL…CGRS) and 443–454 (SDESTEGHTSAS). 2 disordered regions span residues 376 to 403 (PTSL…RSFS) and 443 to 469 (SDES…PRGI).

This sequence belongs to the protein kinase superfamily. CAMK Ser/Thr protein kinase family. Smok subfamily. In terms of tissue distribution, testis-specific. Expressed in the testis from 22 days postpartum (22 dpp).

It catalyses the reaction L-seryl-[protein] + ATP = O-phospho-L-seryl-[protein] + ADP + H(+). The enzyme catalyses L-threonyl-[protein] + ATP = O-phospho-L-threonyl-[protein] + ADP + H(+). In terms of biological role, may play a role in sperm motility, especially in the regulation of flagellar function. This is Sperm motility kinase 2A (Smok2a) from Mus musculus (Mouse).